Reading from the N-terminus, the 545-residue chain is uncharacterized protein (545 aa).

Disordered regions lie at residues 1-162 (MSSG…DPQE) and 200-250 (YPPV…EPPP). Polar residues predominate over residues 86-100 (NYRSHSSADYLTPNS). Low complexity-rich tracts occupy residues 109 to 128 (TTPRRLPLQPQQQAPATATK) and 141 to 152 (SGASTSSGTSST). Polar residues-rich tracts occupy residues 212–221 (SSRTGTLQRT) and 228–244 (ISSTPQPQPTYADQMQS). The 83-residue stretch at 458–540 (RVLVEKMMPG…VTITLLPAVG (83 aa)) folds into the PDZ domain.

This is an uncharacterized protein from Caenorhabditis elegans.